The sequence spans 324 residues: Homocysteine S-methyltransferase 1 (324 aa).

Residues 6-320 enclose the Hcy-binding domain; it reads IKELIVEHPG…KDIAEIASAV (315 aa). Zn(2+) contacts are provided by Cys238, Cys305, and Cys306.

Zn(2+) is required as a cofactor.

The protein resides in the cytoplasm. It catalyses the reaction S-methyl-L-methionine + L-homocysteine = 2 L-methionine + H(+). Its function is as follows. Homocysteine S-methyltransferase involved in the conversion of S-adenosylmethionine (AdoMet) to methionine to control the methionine/AdoMet ratio. Also converts S-methylmethionine (SMM) to methionine. This chain is Homocysteine S-methyltransferase 1 (MHT1), found in Saccharomyces cerevisiae (strain ATCC 204508 / S288c) (Baker's yeast).